We begin with the raw amino-acid sequence, 452 residues long: Mitochondrial distribution and morphology protein 10 (452 aa).

This sequence belongs to the MDM10 family. Component of the ER-mitochondria encounter structure (ERMES) or MDM complex, composed of MMM1, MDM10, MDM12 and MDM34. Associates with the mitochondrial outer membrane sorting assembly machinery SAM(core) complex.

The protein resides in the mitochondrion outer membrane. In terms of biological role, component of the ERMES/MDM complex, which serves as a molecular tether to connect the endoplasmic reticulum and mitochondria. Components of this complex are involved in the control of mitochondrial shape and protein biogenesis and may function in phospholipid exchange. MDM10 is involved in the late assembly steps of the general translocase of the mitochondrial outer membrane (TOM complex). Functions in the TOM40-specific route of the assembly of outer membrane beta-barrel proteins, including the association of TOM40 with the receptor TOM22 and small TOM proteins. Can associate with the SAM(core) complex as well as the MDM12-MMM1 complex, both involved in late steps of the major beta-barrel assembly pathway, that is responsible for biogenesis of all outer membrane beta-barrel proteins. May act as a switch that shuttles between both complexes and channels precursor proteins into the TOM40-specific pathway. Plays a role in mitochondrial morphology and in the inheritance of mitochondria. The chain is Mitochondrial distribution and morphology protein 10 from Kluyveromyces lactis (strain ATCC 8585 / CBS 2359 / DSM 70799 / NBRC 1267 / NRRL Y-1140 / WM37) (Yeast).